The sequence spans 323 residues: o-succinylbenzoate synthase (323 aa).

Catalysis depends on K134, which acts as the Proton donor. Mg(2+) is bound by residues D162, E191, and D214. The Proton acceptor role is filled by K236.

Belongs to the mandelate racemase/muconate lactonizing enzyme family. MenC type 1 subfamily. The cofactor is a divalent metal cation.

The catalysed reaction is (1R,6R)-6-hydroxy-2-succinyl-cyclohexa-2,4-diene-1-carboxylate = 2-succinylbenzoate + H2O. It functions in the pathway quinol/quinone metabolism; 1,4-dihydroxy-2-naphthoate biosynthesis; 1,4-dihydroxy-2-naphthoate from chorismate: step 4/7. It participates in quinol/quinone metabolism; menaquinone biosynthesis. In terms of biological role, converts 2-succinyl-6-hydroxy-2,4-cyclohexadiene-1-carboxylate (SHCHC) to 2-succinylbenzoate (OSB). In Yersinia pestis bv. Antiqua (strain Antiqua), this protein is o-succinylbenzoate synthase.